The primary structure comprises 238 residues: Ribonuclease PH (238 aa).

Residues Arg-86 and 124–126 (GTR) each bind phosphate.

This sequence belongs to the RNase PH family. Homohexameric ring arranged as a trimer of dimers.

The catalysed reaction is tRNA(n+1) + phosphate = tRNA(n) + a ribonucleoside 5'-diphosphate. Functionally, phosphorolytic 3'-5' exoribonuclease that plays an important role in tRNA 3'-end maturation. Removes nucleotide residues following the 3'-CCA terminus of tRNAs; can also add nucleotides to the ends of RNA molecules by using nucleoside diphosphates as substrates, but this may not be physiologically important. Probably plays a role in initiation of 16S rRNA degradation (leading to ribosome degradation) during starvation. The polypeptide is Ribonuclease PH (Citrobacter koseri (strain ATCC BAA-895 / CDC 4225-83 / SGSC4696)).